The chain runs to 311 residues: Aspartate carbamoyltransferase catalytic subunit (311 aa).

Arginine 58 and threonine 59 together coordinate carbamoyl phosphate. An L-aspartate-binding site is contributed by lysine 86. Arginine 108, histidine 136, and glutamine 139 together coordinate carbamoyl phosphate. Arginine 169 and arginine 223 together coordinate L-aspartate. Glycine 264 and proline 265 together coordinate carbamoyl phosphate.

This sequence belongs to the aspartate/ornithine carbamoyltransferase superfamily. ATCase family. Heterododecamer (2C3:3R2) of six catalytic PyrB chains organized as two trimers (C3), and six regulatory PyrI chains organized as three dimers (R2).

The catalysed reaction is carbamoyl phosphate + L-aspartate = N-carbamoyl-L-aspartate + phosphate + H(+). Its pathway is pyrimidine metabolism; UMP biosynthesis via de novo pathway; (S)-dihydroorotate from bicarbonate: step 2/3. In terms of biological role, catalyzes the condensation of carbamoyl phosphate and aspartate to form carbamoyl aspartate and inorganic phosphate, the committed step in the de novo pyrimidine nucleotide biosynthesis pathway. The sequence is that of Aspartate carbamoyltransferase catalytic subunit from Pelodictyon phaeoclathratiforme (strain DSM 5477 / BU-1).